Reading from the N-terminus, the 210-residue chain is Large ribosomal subunit protein uL4 (210 aa).

The segment covering 41 to 52 has biased composition (polar residues); sequence MNNARQGTASSK. The interval 41 to 80 is disordered; sequence MNNARQGTASSKTRSEVRGGGRKPWRQKGTGRARAGSSRS. The span at 60 to 71 shows a compositional bias: basic residues; it reads GGRKPWRQKGTG.

This sequence belongs to the universal ribosomal protein uL4 family. Part of the 50S ribosomal subunit.

Its function is as follows. One of the primary rRNA binding proteins, this protein initially binds near the 5'-end of the 23S rRNA. It is important during the early stages of 50S assembly. It makes multiple contacts with different domains of the 23S rRNA in the assembled 50S subunit and ribosome. Functionally, forms part of the polypeptide exit tunnel. This Acaryochloris marina (strain MBIC 11017) protein is Large ribosomal subunit protein uL4.